Here is a 134-residue protein sequence, read N- to C-terminus: ATP synthase epsilon chain, chloroplastic (134 aa).

It belongs to the ATPase epsilon chain family. As to quaternary structure, F-type ATPases have 2 components, CF(1) - the catalytic core - and CF(0) - the membrane proton channel. CF(1) has five subunits: alpha(3), beta(3), gamma(1), delta(1), epsilon(1). CF(0) has three main subunits: a, b and c.

It localises to the plastid. The protein resides in the chloroplast thylakoid membrane. In terms of biological role, produces ATP from ADP in the presence of a proton gradient across the membrane. The chain is ATP synthase epsilon chain, chloroplastic from Phalaenopsis aphrodite subsp. formosana (Moth orchid).